The chain runs to 383 residues: Dual-specificity RNA methyltransferase RlmN (383 aa).

Glutamate 94 (proton acceptor) is an active-site residue. The Radical SAM core domain occupies 100-339; that stretch reads DGDRATLCVS…VTVRRTRGDD (240 aa). Cysteine 107 and cysteine 344 are disulfide-bonded. 3 residues coordinate [4Fe-4S] cluster: cysteine 114, cysteine 118, and cysteine 121. Residues 168–169, serine 200, 222–224, and asparagine 301 each bind S-adenosyl-L-methionine; these read GE and SLH. Cysteine 344 acts as the S-methylcysteine intermediate in catalysis.

Belongs to the radical SAM superfamily. RlmN family. It depends on [4Fe-4S] cluster as a cofactor.

Its subcellular location is the cytoplasm. The catalysed reaction is adenosine(2503) in 23S rRNA + 2 reduced [2Fe-2S]-[ferredoxin] + 2 S-adenosyl-L-methionine = 2-methyladenosine(2503) in 23S rRNA + 5'-deoxyadenosine + L-methionine + 2 oxidized [2Fe-2S]-[ferredoxin] + S-adenosyl-L-homocysteine. It carries out the reaction adenosine(37) in tRNA + 2 reduced [2Fe-2S]-[ferredoxin] + 2 S-adenosyl-L-methionine = 2-methyladenosine(37) in tRNA + 5'-deoxyadenosine + L-methionine + 2 oxidized [2Fe-2S]-[ferredoxin] + S-adenosyl-L-homocysteine. Specifically methylates position 2 of adenine 2503 in 23S rRNA and position 2 of adenine 37 in tRNAs. m2A2503 modification seems to play a crucial role in the proofreading step occurring at the peptidyl transferase center and thus would serve to optimize ribosomal fidelity. The chain is Dual-specificity RNA methyltransferase RlmN from Aliivibrio salmonicida (strain LFI1238) (Vibrio salmonicida (strain LFI1238)).